Here is a 91-residue protein sequence, read N- to C-terminus: Probable Fe(2+)-trafficking protein (91 aa).

The protein belongs to the Fe(2+)-trafficking protein family.

Its function is as follows. Could be a mediator in iron transactions between iron acquisition and iron-requiring processes, such as synthesis and/or repair of Fe-S clusters in biosynthetic enzymes. The sequence is that of Probable Fe(2+)-trafficking protein from Tolumonas auensis (strain DSM 9187 / NBRC 110442 / TA 4).